Reading from the N-terminus, the 744-residue chain is Eukaryotic translation initiation factor 3 subunit B (744 aa).

A disordered region spans residues 1–21; it reads MAPSFDHLPDPEEDEYDEEEL. The segment covering 11–21 has biased composition (acidic residues); sequence PEEDEYDEEEL. The region spanning 40–126 is the RRM domain; sequence TFVVIDGLPE…HTLRVNKLTD (87 aa). WD repeat units lie at residues 193-232, 234-290, 307-348, and 577-622; these read DRQH…RQKR, AHPF…PLRS, PIKR…LLDK, and ADHY…LREE.

The protein belongs to the eIF-3 subunit B family. In terms of assembly, component of the eukaryotic translation initiation factor 3 (eIF-3) complex.

It localises to the cytoplasm. In terms of biological role, RNA-binding component of the eukaryotic translation initiation factor 3 (eIF-3) complex, which is involved in protein synthesis of a specialized repertoire of mRNAs and, together with other initiation factors, stimulates binding of mRNA and methionyl-tRNAi to the 40S ribosome. The eIF-3 complex specifically targets and initiates translation of a subset of mRNAs involved in cell proliferation. The chain is Eukaryotic translation initiation factor 3 subunit B (prt1) from Botryotinia fuckeliana (strain B05.10) (Noble rot fungus).